Here is a 344-residue protein sequence, read N- to C-terminus: MEDSGKTFGSEEEETNYWRDLAMTYKQRAENTQEELREFQEGSREYEAELETQLQQAETRNRDLLSENNRLRMELESVKEKFEMQHSEGYRQISALEDDLAHTKAIKDQLQKYIRELEQANDDLERAKRATIMSLEDFEQRLNQAIERNAFLESELDEKENLLESVQRLKDEARDLRQELAVQQKQDKPRTPMPSSGETKRTDMAVQATGSAPSTPITHQGSSSGLNTPETFRCGLGSPSSGTPLTPAARISALNIVGDLLRKVGALESKLASCKNFMYDQSPSRKSGPALGRGTKNRDGIDRRPGSTAVGDKGSGKRLEFAKPSSQLSSPALPSTQGVVKLLL.

The self-association stretch occupies residues 1–93; that stretch reads MEDSGKTFGS…MQHSEGYRQI (93 aa). A coiled-coil region spans residues 18–188; it reads WRDLAMTYKQ…ELAVQQKQDK (171 aa). The span at 30 to 47 shows a compositional bias: basic and acidic residues; it reads ENTQEELREFQEGSREYE. The tract at residues 30–65 is disordered; that stretch reads ENTQEELREFQEGSREYEAELETQLQQAETRNRDLL. Residues 88 to 156 are interaction with PAFAH1B1; that stretch reads EGYRQISALE…ERNAFLESEL (69 aa). The interval 167-290 is interaction with CENPF; the sequence is QRLKDEARDL…QSPSRKSGPA (124 aa). Positions 181–243 are disordered; it reads AVQQKQDKPR…CGLGSPSSGT (63 aa). Residues 208 to 230 show a composition bias toward polar residues; that stretch reads ATGSAPSTPITHQGSSSGLNTPE. A Phosphoserine modification is found at serine 211. Threonine 215, threonine 228, threonine 243, and threonine 246 each carry phosphothreonine. Cysteine 274 is lipidated: S-palmitoyl cysteine; by ZDHHC2, ZDHHC3 and ZDHHC7. A disordered region spans residues 279–337; sequence YDQSPSRKSGPALGRGTKNRDGIDRRPGSTAVGDKGSGKRLEFAKPSSQLSSPALPSTQ. Phosphoserine is present on serine 282. The span at 296 to 305 shows a compositional bias: basic and acidic residues; the sequence is KNRDGIDRRP. The segment covering 324 to 335 has biased composition (low complexity); sequence PSSQLSSPALPS.

The protein belongs to the nudE family. As to quaternary structure, homodimer. Interacts with CNTRL, LIS1, dynein, SLMAP and TCP1. Interacts with CENPF, dynactin, tubulin gamma, PAFAH1B1, PCM1 and PCNT. Interacts with ZNF365. Interacts with GTP-bound RAB9A and RAB9B; the interaction leads to RAB9-dynein motor tethering. Interacts (via C-terminus) with MCRS1 (via C-terminus); phosphorylation of NDE1 inhibits the interaction. In terms of processing, phosphorylated in mitosis. Phosphorylation at Thr-246 is essential for the G2/M transition. In terms of tissue distribution, expressed in brain, heart, kidney, liver, lung, skeletal muscle, spleen and testis.

It localises to the cytoplasm. Its subcellular location is the cytoskeleton. The protein localises to the microtubule organizing center. The protein resides in the centrosome. It is found in the spindle. It localises to the chromosome. Its subcellular location is the centromere. The protein localises to the kinetochore. The protein resides in the cleavage furrow. It is found in the cytoplasmic vesicle membrane. Required for centrosome duplication and formation and function of the mitotic spindle. Essential for the development of the cerebral cortex. May regulate the production of neurons by controlling the orientation of the mitotic spindle during division of cortical neuronal progenitors of the proliferative ventricular zone of the brain. Orientation of the division plane perpendicular to the layers of the cortex gives rise to two proliferative neuronal progenitors whereas parallel orientation of the division plane yields one proliferative neuronal progenitor and a postmitotic neuron. A premature shift towards a neuronal fate within the progenitor population may result in an overall reduction in the final number of neurons and an increase in the number of neurons in the deeper layers of the cortex. Acts as a RAB9A/B effector that tethers RAB9-associated late endosomes to the dynein motor for their retrograde transport to the trans-Golgi network. The chain is Nuclear distribution protein nudE homolog 1 from Rattus norvegicus (Rat).